A 912-amino-acid chain; its full sequence is Transferrin-binding protein A (912 aa).

The N-terminal stretch at methionine 1–alanine 23 is a signal peptide. The TonB box motif lies at glutamate 50–glutamate 57. Residues lysine 63–lysine 188 form the TBDR plug domain. The TBDR beta-barrel domain occupies serine 199 to phenylalanine 912. The short motif at threonine 895 to phenylalanine 912 is the TonB C-terminal box element.

Belongs to the TonB-dependent receptor family.

It is found in the cell outer membrane. Its function is as follows. Haemophilus acquires iron by extracting it from serum transferrin (TF) in its human host. Acts as a transferrin receptor and is required for transferrin utilization. The protein is Transferrin-binding protein A of Haemophilus influenzae (strain ATCC 51907 / DSM 11121 / KW20 / Rd).